The sequence spans 1647 residues: Ras GTPase-activating-like protein IQG1 (1647 aa).

The disordered stretch occupies residues 18 to 51 (DTTATTTTTTTSNVLQPSNRLNSPTKFNRKSLDN). Residues 19–28 (TTATTTTTTT) show a composition bias toward low complexity. Over residues 29–43 (SNVLQPSNRLNSPTK) the composition is skewed to polar residues. Residue Ser-48 is modified to Phosphoserine. Thr-66, Thr-72, and Thr-82 each carry phosphothreonine. Ser-83, Ser-91, and Ser-139 each carry phosphoserine. Residues 143–162 (FNTQSNVHTPLKQLNQPIGT) are compositionally biased toward polar residues. The disordered stretch occupies residues 143–175 (FNTQSNVHTPLKQLNQPIGTPSSSSLSPAKNAS). Residues 163–175 (PSSSSLSPAKNAS) are compositionally biased toward low complexity. Ser-165, Ser-167, and Ser-169 each carry phosphoserine. The 108-residue stretch at 184-291 (LCRIEAIKQW…FCLHALSYIL (108 aa)) folds into the Calponin-homology (CH) domain. The interval 326 to 427 (PLPNFSSADT…STSNAKLELH (102 aa)) is disordered. Positions 342 to 355 (TSNNNSSTTSATAA) are enriched in low complexity. Position 367 is a phosphothreonine (Thr-367). A compositionally biased stretch (low complexity) spans 368 to 379 (PSPLKRPQQLQK). At Ser-369 the chain carries Phosphoserine. Basic and acidic residues-rich tracts occupy residues 380 to 392 (KQLELVEDNKPEL) and 402 to 413 (ISRDDPFTDRVD). 2 positions are modified to phosphoserine: Ser-433 and Ser-440. IQ domains are found at residues 467–478 (FQSLARGAVFRY), 528–539 (LQSIIRKNFVIN), 556–567 (LQSLIRGKLTRD), 586–597 (FQSLVRMKSIYS), 616–627 (LQSIARSQLYHR), 642–653 (IQSIIRRNAVIE), 672–683 (LQSIARGGVART), 734–745 (VQTLFRGVLSRY), and 764–775 (LQSVARGKLMRG). Residues 841–919 (LSDLKDLIIE…KKIELWQTLF (79 aa)) adopt a coiled-coil conformation. In terms of domain architecture, Ras-GAP spans 958-1223 (PVRDSSITYH…DTVKSIISQA (266 aa)). Phosphoserine occurs at positions 1064, 1068, 1088, 1383, and 1385.

Interacts with myosin MYO1 and its light chain MLC1. Interacts with BNI1. Interacts with BNR1. Interacts with CLB2. Interacts with CLB4. Interacts with CDC28. Post-translationally, hyperphosphorylated. Phosphorylation is cell cycle-dependent and peaks at the time of cytokinesis. Contains 21 consensus sites for cyclin-dependent kinases (CDKs). At least some of them are phosphorylated by the CLB2-CDC28 kinase complex. Mutation of 15 of the phosphorylation sites to Ala caused both premature assembly and delayed disassembly of the actomyosin ring, blocked interaction with the actin-nucleating proteins BNI1 and BNR1, and resulted in defects in cytokinesis.

The protein localises to the bud neck. Functionally, required for the assembly and the contraction of the actomyosin ring at the bud neck during cytokinesis. The sequence is that of Ras GTPase-activating-like protein IQG1 (IQG1) from Candida albicans (strain SC5314 / ATCC MYA-2876) (Yeast).